The chain runs to 400 residues: CinA-like protein (400 aa).

This sequence belongs to the CinA family.

The sequence is that of CinA-like protein from Escherichia coli (strain 55989 / EAEC).